The primary structure comprises 135 residues: Protein NrdI (135 aa).

Belongs to the NrdI family.

Probably involved in ribonucleotide reductase function. This Salmonella gallinarum (strain 287/91 / NCTC 13346) protein is Protein NrdI.